Consider the following 956-residue polypeptide: Plasma membrane ATPase 3 (956 aa).

Residues 1–65 (MGEKPEVLDA…EKKESKFSKF (65 aa)) are Cytoplasmic-facing. The helical transmembrane segment at 66-85 (LGFMWNPLSWVMEAAAIMAI) threads the bilayer. Topologically, residues 86–97 (ALANGGGKPPDW) are extracellular. The chain crosses the membrane as a helical span at residues 98–118 (QDFVGIITLLIINSTISFIEE). Topologically, residues 119–247 (NNAGNAAAAL…GHFQKVLTAI (129 aa)) are cytoplasmic. A helical membrane pass occupies residues 248–268 (GNFCICSIAVGMIIEIIVMYP). Residues 269–278 (IQHRKYRPGI) are Extracellular-facing. Residues 279–300 (DNLLVLLIGGIPIAMPTVLSVT) traverse the membrane as a helical segment. Over 301 to 647 (MAIGSHRLAQ…TSRAIFQRMK (347 aa)) the chain is Cytoplasmic. Catalysis depends on aspartate 333, which acts as the 4-aspartylphosphate intermediate. 2 residues coordinate Mg(2+): aspartate 592 and aspartate 596. A helical transmembrane segment spans residues 648-669 (NYTIYAVSITIRIVLGFMLLAL). Residues 670 to 674 (IWQFD) are Extracellular-facing. The helical transmembrane segment at 675–697 (FPPFMVLIIAILNDGTIMTISKD) threads the bilayer. The Cytoplasmic portion of the chain corresponds to 698–713 (RVKPSPLPDSWKLAEI). A helical transmembrane segment spans residues 714–734 (FTTGVVLGGYLAMMTVIFFWA). Residues 735 to 759 (AYKTNFFPRVFGVSTLEKTATDDFR) lie on the Extracellular side of the membrane. A helical membrane pass occupies residues 760 to 780 (KLASAIYLQVSTISQALIFVT). Over 781–792 (RSRSWSFMERPG) the chain is Cytoplasmic. The chain crosses the membrane as a helical span at residues 793 to 813 (LLLVVAFFIAQLVATLIAVYA). Over 814 to 822 (NWSFAAIEG) the chain is Extracellular. A helical transmembrane segment spans residues 823–843 (IGWGWAGVIWLYNIVFYIPLD). Over 844-956 (LXXFLIRYAL…IETIQQAYTV (113 aa)) the chain is Cytoplasmic.

Belongs to the cation transport ATPase (P-type) (TC 3.A.3) family. Type IIIA subfamily. In terms of tissue distribution, expressed in roots, stems, leaves from both vegetative and flowering plants, and flowers at early and late stages of development with highest expression levels found in flowers and root tissue.

The protein localises to the cell membrane. The catalysed reaction is ATP + H2O + H(+)(in) = ADP + phosphate + 2 H(+)(out). The plasma membrane ATPase of plants and fungi is a hydrogen ion pump. The proton gradient it generates drives the active transport of nutrients by H(+)-symport. The resulting external acidification and/or internal alkinization may mediate growth responses. In Nicotiana plumbaginifolia (Leadwort-leaved tobacco), this protein is Plasma membrane ATPase 3 (PMA3).